Here is a 561-residue protein sequence, read N- to C-terminus: Cytosolic purine 5'-nucleotidase (561 aa).

The active-site Nucleophile is Asp52. Positions 52 and 54 each coordinate GMP. IMP is bound by residues Asp52 and Asp54. The Mg(2+) site is built by Asp52 and Asp54. Asp54 (proton donor) is an active-site residue. Residue Arg144 coordinates (2R)-2,3-bisphosphoglycerate. ATP is bound by residues Arg144 and Asn154. The dATP site is built by Arg144 and Asn154. Asn154 serves as a coordination point for adenosine. Residue Asn154 participates in P(1),P(4)-bis(5'-adenosyl) tetraphosphate binding. 5 residues coordinate GMP: Arg202, Asp206, Lys215, Thr249, and Asn250. Arg202, Asp206, Lys215, Thr249, Asn250, Ser251, and Lys292 together coordinate IMP. Lys292 serves as a coordination point for GMP. Asp351 provides a ligand contact to Mg(2+). Residue Lys362 coordinates (2R)-2,3-bisphosphoglycerate. A P(1),P(4)-bis(5'-adenosyl) tetraphosphate-binding site is contributed by Lys362. A Phosphoserine modification is found at Ser418. Adenosine is bound by residues Met436 and Gln453. ATP is bound by residues Gln453 and Arg456. Residues Gln453 and Arg456 each contribute to the dATP site. Gln453 contacts P(1),P(4)-bis(5'-adenosyl) tetraphosphate. Tyr457 contacts (2R)-2,3-bisphosphoglycerate. Tyr457 provides a ligand contact to P(1),P(4)-bis(5'-adenosyl) tetraphosphate. A phosphoserine mark is found at Ser502, Ser511, and Ser527. The tract at residues 538-561 (PLAPQEITHCHDEDDDEEEEEEEE) is disordered. Residues 548 to 561 (HDEDDDEEEEEEEE) form a required for tetramer assembly region. The segment covering 550–561 (EDDDEEEEEEEE) has biased composition (acidic residues).

The protein belongs to the 5'(3')-deoxyribonucleotidase family. Homotetramer. Mg(2+) serves as cofactor. Widely expressed.

The protein resides in the cytoplasm. It is found in the cytosol. The enzyme catalyses a ribonucleoside 5'-phosphate + H2O = a ribonucleoside + phosphate. The catalysed reaction is a 2'-deoxyribonucleoside + a ribonucleoside 5'-phosphate = a ribonucleoside + a 2'-deoxyribonucleoside 5'-phosphate. It carries out the reaction IMP + H2O = inosine + phosphate. It catalyses the reaction GMP + H2O = guanosine + phosphate. The enzyme catalyses dIMP + H2O = 2'-deoxyinosine + phosphate. The catalysed reaction is dGMP + H2O = 2'-deoxyguanosine + phosphate. It carries out the reaction XMP + H2O = xanthosine + phosphate. It catalyses the reaction inosine + GMP = guanosine + IMP. The enzyme catalyses dGMP + inosine = 2'-deoxyguanosine + IMP. The catalysed reaction is dIMP + inosine = 2'-deoxyinosine + IMP. It carries out the reaction inosine + UMP = uridine + IMP. It catalyses the reaction inosine + CMP = cytidine + IMP. The enzyme catalyses inosine + AMP = IMP + adenosine. With respect to regulation, allosterically activated by various compounds including ATP, 2,3-BPG/2,3-Bisphosphoglyceric acid and Ap4A/P1,P4-bis(5'-adenosyl) tetraphosphate. Binding of an allosteric activator is a prerequisiste to magnesium and substrate binding. Inhibited by inorganic phosphate. In terms of biological role, broad specificity cytosolic 5'-nucleotidase that catalyzes the dephosphorylation of 6-hydroxypurine nucleoside 5'-monophosphates. In addition, possesses a phosphotransferase activity by which it can transfer a phosphate from a donor nucleoside monophosphate to an acceptor nucleoside, preferably inosine, deoxyinosine and guanosine. Has the highest activities for IMP and GMP followed by dIMP, dGMP and XMP. Could also catalyze the transfer of phosphates from pyrimidine monophosphates but with lower efficiency. Through these activities regulates the purine nucleoside/nucleotide pools within the cell. The protein is Cytosolic purine 5'-nucleotidase of Homo sapiens (Human).